A 282-amino-acid polypeptide reads, in one-letter code: N-acetylaspartate synthetase (282 aa).

The helical transmembrane segment at 103 to 125 (FLTVMCYVMTKSFTLTFCAPFIL) threads the bilayer. One can recognise an N-acetyltransferase domain in the interval 110–269 (VMTKSFTLTF…RSPLERLFFQ (160 aa)).

It belongs to the NAT8 family.

Its subcellular location is the cytoplasm. The protein localises to the microsome membrane. It localises to the mitochondrion membrane. It is found in the endoplasmic reticulum membrane. It carries out the reaction L-aspartate + acetyl-CoA = N-acetyl-L-aspartate + CoA + H(+). Functionally, catalyzes the synthesis of N-acetylaspartate acid (NAA) from L-aspartate and acetyl-CoA. The polypeptide is N-acetylaspartate synthetase (nat8l) (Danio rerio (Zebrafish)).